Consider the following 233-residue polypeptide: Ubiquinone biosynthesis O-methyltransferase (233 aa).

Arg37, Gly56, Asp77, and Met121 together coordinate S-adenosyl-L-methionine.

This sequence belongs to the methyltransferase superfamily. UbiG/COQ3 family.

It catalyses the reaction a 3-demethylubiquinol + S-adenosyl-L-methionine = a ubiquinol + S-adenosyl-L-homocysteine + H(+). It carries out the reaction a 3-(all-trans-polyprenyl)benzene-1,2-diol + S-adenosyl-L-methionine = a 2-methoxy-6-(all-trans-polyprenyl)phenol + S-adenosyl-L-homocysteine + H(+). Its pathway is cofactor biosynthesis; ubiquinone biosynthesis. Functionally, O-methyltransferase that catalyzes the 2 O-methylation steps in the ubiquinone biosynthetic pathway. In Azoarcus sp. (strain BH72), this protein is Ubiquinone biosynthesis O-methyltransferase.